Consider the following 409-residue polypeptide: Multifunctional CCA protein (409 aa).

The ATP site is built by glycine 8 and arginine 11. Glycine 8 and arginine 11 together coordinate CTP. Mg(2+) contacts are provided by aspartate 21 and aspartate 23. Residues arginine 91, arginine 137, and arginine 140 each contribute to the ATP site. Arginine 91, arginine 137, and arginine 140 together coordinate CTP. The HD domain maps to 228–329 (TGAHTLSVLL…LELLQSFDVF (102 aa)).

Belongs to the tRNA nucleotidyltransferase/poly(A) polymerase family. Bacterial CCA-adding enzyme type 1 subfamily. As to quaternary structure, monomer. Can also form homodimers and oligomers. The cofactor is Mg(2+). It depends on Ni(2+) as a cofactor.

The catalysed reaction is a tRNA precursor + 2 CTP + ATP = a tRNA with a 3' CCA end + 3 diphosphate. It catalyses the reaction a tRNA with a 3' CCA end + 2 CTP + ATP = a tRNA with a 3' CCACCA end + 3 diphosphate. In terms of biological role, catalyzes the addition and repair of the essential 3'-terminal CCA sequence in tRNAs without using a nucleic acid template. Adds these three nucleotides in the order of C, C, and A to the tRNA nucleotide-73, using CTP and ATP as substrates and producing inorganic pyrophosphate. tRNA 3'-terminal CCA addition is required both for tRNA processing and repair. Also involved in tRNA surveillance by mediating tandem CCA addition to generate a CCACCA at the 3' terminus of unstable tRNAs. While stable tRNAs receive only 3'-terminal CCA, unstable tRNAs are marked with CCACCA and rapidly degraded. This is Multifunctional CCA protein from Pseudomonas fluorescens (strain ATCC BAA-477 / NRRL B-23932 / Pf-5).